The primary structure comprises 838 residues: Translation initiation factor IF-2 (838 aa).

Positions 50 to 108 are disordered; sequence VQSGKKPESPEKKDIKQNTQKEAPETQTQQKPIEQEVETKQNIDSTPIKVEPKQESLAS. Residues 54 to 65 show a composition bias toward basic and acidic residues; that stretch reads KKPESPEKKDIK. The span at 66-81 shows a compositional bias: polar residues; sequence QNTQKEAPETQTQQKP. One can recognise a tr-type G domain in the interval 337–506; sequence SRAPVVTIMG…LLQAELLELK (170 aa). A G1 region spans residues 346 to 353; that stretch reads GHVDHGKT. 346 to 353 provides a ligand contact to GTP; sequence GHVDHGKT. The tract at residues 371–375 is G2; that stretch reads GITQH. The interval 392–395 is G3; the sequence is DTPG. Residues 392–396 and 446–449 contribute to the GTP site; these read DTPGH and NKMD. The segment at 446–449 is G4; that stretch reads NKMD. Residues 482 to 484 are G5; it reads SAK.

This sequence belongs to the TRAFAC class translation factor GTPase superfamily. Classic translation factor GTPase family. IF-2 subfamily.

It localises to the cytoplasm. Its function is as follows. One of the essential components for the initiation of protein synthesis. Protects formylmethionyl-tRNA from spontaneous hydrolysis and promotes its binding to the 30S ribosomal subunits. Also involved in the hydrolysis of GTP during the formation of the 70S ribosomal complex. This chain is Translation initiation factor IF-2, found in Campylobacter fetus subsp. fetus (strain 82-40).